We begin with the raw amino-acid sequence, 484 residues long: 60S ribosome subunit biogenesis protein NOP8 (484 aa).

The 77-residue stretch at 7-83 folds into the RRM domain; that stretch reads KRIFVGNIFH…NILKVDEAKP (77 aa). Phosphoserine occurs at positions 234, 239, and 268. Residues 260-330 are disordered; it reads DKPMTLNDSD…EGDGQEDNEF (71 aa). The segment covering 320–329 has biased composition (acidic residues); it reads DEGDGQEDNE. Ser370 bears the Phosphoserine mark.

As to quaternary structure, interacts with NIP7 and RRP43. Together with DBP6, URB1, URB2 and RSA3, forms an RNA-independent complex, which is required during early maturation of nascent 60S ribosomal subunits.

It localises to the nucleus. The protein localises to the nucleolus. Required for 60S ribosomal subunit synthesis. May be involved in assembly reactions occurring within late pre-ribosomal particles. The chain is 60S ribosome subunit biogenesis protein NOP8 (NOP8) from Saccharomyces cerevisiae (strain ATCC 204508 / S288c) (Baker's yeast).